A 457-amino-acid polypeptide reads, in one-letter code: PDZ and LIM domain protein 7 (457 aa).

Residues 1–85 (MDSFKVVLEG…RLSLGLSRAQ (85 aa)) enclose the PDZ domain. Position 78 is a phosphoserine (Ser-78). Disordered stretches follow at residues 82-166 (SRAQ…QSRS) and 186-226 (FMKK…PWAV). The residue at position 96 (Thr-96) is a Phosphothreonine. Arg-103 bears the Asymmetric dimethylarginine mark. Residue Ser-111 is modified to Phosphoserine. Residues 126-135 (DSTLRQNGQL) show a composition bias toward polar residues. Residues 144-157 (SKQRLMEDTEDWRP) are compositionally biased toward basic and acidic residues. Phosphoserine is present on Ser-247. 3 consecutive LIM zinc-binding domains span residues 280–338 (PVCH…VRYA), 339–398 (PNCA…MFGT), and 399–457 (KCRG…FSHV).

In terms of assembly, specifically binds via its LIM zinc-binding 3 domain (LIM 3) domain to endocytic codes of INSR, but not with those of IGF1R, LDLR, TFRC, or EGFR. Interacts with various PKC isoforms through the LIM zinc-binding domains. Binds to RET in a phosphorylation-independent manner via its LIM zinc-binding domain 2 (LIM 2). Probably part of a complex with SHC and the RET dimer. Interacts with TPM2, TBX4 and TBX5.

The protein localises to the cytoplasm. It localises to the cytoskeleton. Its function is as follows. May function as a scaffold on which the coordinated assembly of proteins can occur. May play a role as an adapter that, via its PDZ domain, localizes LIM-binding proteins to actin filaments of both skeletal muscle and nonmuscle tissues. Involved in both of the two fundamental mechanisms of bone formation, direct bone formation (e.g. embryonic flat bones mandible and cranium), and endochondral bone formation (e.g. embryonic long bone development). Plays a role during fracture repair. Involved in BMP6 signaling pathway. This is PDZ and LIM domain protein 7 (Pdlim7) from Mus musculus (Mouse).